Consider the following 344-residue polypeptide: DNA-directed RNA polymerase subunit alpha (344 aa).

The segment at 1-246 (MPVEKFLKDF…EFLFPLIDFE (246 aa)) is alpha N-terminal domain (alpha-NTD). The tract at residues 259–344 (ESSNLLDMSI…VLSKNVKISE (86 aa)) is alpha C-terminal domain (alpha-CTD).

The protein belongs to the RNA polymerase alpha chain family. In terms of assembly, homodimer. The RNAP catalytic core consists of 2 alpha, 1 beta, 1 beta' and 1 omega subunit. When a sigma factor is associated with the core the holoenzyme is formed, which can initiate transcription.

It carries out the reaction RNA(n) + a ribonucleoside 5'-triphosphate = RNA(n+1) + diphosphate. Functionally, DNA-dependent RNA polymerase catalyzes the transcription of DNA into RNA using the four ribonucleoside triphosphates as substrates. The sequence is that of DNA-directed RNA polymerase subunit alpha from Borrelia garinii subsp. bavariensis (strain ATCC BAA-2496 / DSM 23469 / PBi) (Borreliella bavariensis).